Consider the following 309-residue polypeptide: Probable manganese-dependent inorganic pyrophosphatase (309 aa).

His-9, Asp-13, Asp-15, Asp-75, His-97, and Asp-149 together coordinate Mn(2+).

It belongs to the PPase class C family. Mn(2+) serves as cofactor.

The protein resides in the cytoplasm. It carries out the reaction diphosphate + H2O = 2 phosphate + H(+). The chain is Probable manganese-dependent inorganic pyrophosphatase from Bacillus cereus (strain 03BB102).